The following is a 325-amino-acid chain: NADH-cytochrome b5 reductase 2 (325 aa).

Residues 32-48 (VPLYGGLALAAGGAYYY) form a helical membrane-spanning segment. Residues 74–179 (QGWVDLKLAG…KGPIPKYPWE (106 aa)) form the FAD-binding FR-type domain. Residue 182–217 (KHDHICMIAGGTGITPMYQIIRKIFNNPNDKTKVTL) coordinates FAD.

Belongs to the flavoprotein pyridine nucleotide cytochrome reductase family. Requires FAD as cofactor.

It localises to the mitochondrion outer membrane. The catalysed reaction is 2 Fe(III)-[cytochrome b5] + NADH = 2 Fe(II)-[cytochrome b5] + NAD(+) + H(+). Its function is as follows. May mediate the reduction of outer membrane cytochrome b5. The chain is NADH-cytochrome b5 reductase 2 (MCR1) from Coccidioides immitis (strain RS) (Valley fever fungus).